Here is a 594-residue protein sequence, read N- to C-terminus: Probable acyl-CoA dehydrogenase (594 aa).

Catalysis depends on Glu-405, which acts as the Proton acceptor.

It belongs to the acyl-CoA dehydrogenase family. It depends on FAD as a cofactor.

The enzyme catalyses a 2,3-saturated acyl-CoA + A = a 2,3-dehydroacyl-CoA + AH2. It functions in the pathway lipid metabolism; fatty acid beta-oxidation. Functionally, involved in the degradation of long-chain fatty acids. In Bacillus subtilis (strain 168), this protein is Probable acyl-CoA dehydrogenase (fadE).